Here is a 227-residue protein sequence, read N- to C-terminus: UPF0173 metal-dependent hydrolase Tlet_1100 (227 aa).

Belongs to the UPF0173 family.

The chain is UPF0173 metal-dependent hydrolase Tlet_1100 from Pseudothermotoga lettingae (strain ATCC BAA-301 / DSM 14385 / NBRC 107922 / TMO) (Thermotoga lettingae).